The chain runs to 398 residues: MAKISDLSDELLVKILSFLPTKEAVSTSCLSKQWEFLWMWLSKLEFYFSDGSESACLRDFIAKNLPLHKAPIIESLRFCSFFGSLQPKDLKSWVRIAVSRCVRELSISLHDTTAAVSLPSSLYTCKSLVTLKLYGKKVLLDVPRTVFLPSLKTLQLERLRYSDEDSLRLLLSYCPVLEDLSIVREDYDNLRALVVIVPSLQRLSLEIPGNCSSDGYVIVTPSLKYFKVVDYRESMSYLIEQMPELEEADIVVLQYPEKLLESVTFFKRLSIRVIFNTYTETVYRDGIVFNRLENLKLCICNGDWSKLLIQFLKDSPNLRVLNLLVDDYPSSLGDYEPVRWKNNKSSVPKCLLESLETFEFAGYIGTPEERDFLSYIFKHARCLKSSSILSRPERYHGI.

The F-box domain maps to 1 to 47; it reads MAKISDLSDELLVKILSFLPTKEAVSTSCLSKQWEFLWMWLSKLEFY. The 49-residue stretch at 340 to 388 folds into the FBD domain; it reads WKNNKSSVPKCLLESLETFEFAGYIGTPEERDFLSYIFKHARCLKSSSI.

The polypeptide is Putative FBD-associated F-box protein At5g56700 (Arabidopsis thaliana (Mouse-ear cress)).